The following is a 508-amino-acid chain: Glycerol kinase (508 aa).

Thr-15 is an ADP binding site. ATP contacts are provided by Thr-15, Ser-16, and Ser-17. Thr-15 provides a ligand contact to sn-glycerol 3-phosphate. Residue Arg-19 coordinates ADP. Arg-85, Glu-86, Tyr-138, and Asp-251 together coordinate sn-glycerol 3-phosphate. Positions 85, 86, 138, 251, and 252 each coordinate glycerol. Residues Thr-273, Gly-317, and Gly-419 each contribute to the ADP site. ATP contacts are provided by Thr-273, Gly-317, and Gly-419.

The protein belongs to the FGGY kinase family.

It carries out the reaction glycerol + ATP = sn-glycerol 3-phosphate + ADP + H(+). It functions in the pathway polyol metabolism; glycerol degradation via glycerol kinase pathway; sn-glycerol 3-phosphate from glycerol: step 1/1. With respect to regulation, inhibited by fructose 1,6-bisphosphate (FBP). Functionally, key enzyme in the regulation of glycerol uptake and metabolism. Catalyzes the phosphorylation of glycerol to yield sn-glycerol 3-phosphate. In Mycoplasma genitalium (strain ATCC 33530 / DSM 19775 / NCTC 10195 / G37) (Mycoplasmoides genitalium), this protein is Glycerol kinase.